The following is a 96-amino-acid chain: Interleukin-8 (96 aa).

The N-terminal stretch at 1–22 is a signal peptide; that stretch reads MTSKLAIALLATFMLSAALCEA. R27 carries the post-translational modification Citrulline. 2 cysteine pairs are disulfide-bonded: C34/C61 and C36/C78.

This sequence belongs to the intercrine alpha (chemokine CxC) family. As to quaternary structure, homodimer. Interacts with TNFAIP6 (via Link domain); this interaction interferes with chemokine binding to glycosaminoglycans. In terms of processing, citrullination at Arg-27 prevents proteolysis, and dampens tissue inflammation, it also enhances leukocytosis, possibly through impaired chemokine clearance from the blood circulation.

It is found in the secreted. Functionally, chemotactic factor that mediates inflammatory response by attracting neutrophils, basophils, and T-cells to clear pathogens and protect the host from infection. Also plays an important role in neutrophil activation. Released in response to an inflammatory stimulus, exerts its effect by binding to the G-protein-coupled receptors CXCR1 and CXCR2, primarily found in neutrophils, monocytes and endothelial cells. G-protein heterotrimer (alpha, beta, gamma subunits) constitutively binds to CXCR1/CXCR2 receptor and activation by IL8 leads to beta and gamma subunits release from Galpha (GNAI2 in neutrophils) and activation of several downstream signaling pathways including PI3K and MAPK pathways. This Dasypus novemcinctus (Nine-banded armadillo) protein is Interleukin-8 (CXCL8).